A 73-amino-acid chain; its full sequence is Large ribosomal subunit protein bL31 (73 aa).

The protein belongs to the bacterial ribosomal protein bL31 family. Type A subfamily. Part of the 50S ribosomal subunit.

Its function is as follows. Binds the 23S rRNA. In Ruegeria pomeroyi (strain ATCC 700808 / DSM 15171 / DSS-3) (Silicibacter pomeroyi), this protein is Large ribosomal subunit protein bL31 (rpmE).